A 378-amino-acid chain; its full sequence is Carbazole 1,9a-dioxygenase, terminal oxygenase component CarAa (378 aa).

The Rieske domain occupies Trp29–Val135. [2Fe-2S] cluster-binding residues include Cys69, His71, Cys90, and His93.

In terms of assembly, homotrimer. Carbazole 1,9a-dioxygenase complex consists of a terminal oxygenase component CarAa, a ferredoxin reductase component fdr and a ferredoxin component CarAc. [2Fe-2S] cluster serves as cofactor.

The enzyme catalyses 9H-carbazole + NADH + O2 + H(+) = 2'-aminobiphenyl-2,3-diol + NAD(+). It catalyses the reaction 9H-carbazole + NADPH + O2 + H(+) = 2'-aminobiphenyl-2,3-diol + NADP(+). Part of the multicomponent carbazole 1,9a-dioxygenase (CARDO), that converts carbazole (CAR) into 2-aminobiphenyl-2,3-diol. Catalyzes the dioxygenation at the angular (C-9a) and adjacent (C-1) positions of carbazole to yield a highly unstable cis-hydrodiol intermediate which is spontaneously converted to 2-aminobiphenyl-2,3-diol. The sequence is that of Carbazole 1,9a-dioxygenase, terminal oxygenase component CarAa (carAa) from Sphingomonas sp.